Reading from the N-terminus, the 122-residue chain is Large ribosomal subunit protein uL14 (122 aa).

Belongs to the universal ribosomal protein uL14 family. In terms of assembly, part of the 50S ribosomal subunit. Forms a cluster with proteins L3 and L19. In the 70S ribosome, L14 and L19 interact and together make contacts with the 16S rRNA in bridges B5 and B8.

Functionally, binds to 23S rRNA. Forms part of two intersubunit bridges in the 70S ribosome. The protein is Large ribosomal subunit protein uL14 of Streptococcus equi subsp. equi (strain 4047).